We begin with the raw amino-acid sequence, 493 residues long: tRNA (uracil-5-)-methyltransferase homolog B (493 aa).

The N-terminal 14 residues, Met-1–Phe-14, are a transit peptide targeting the mitochondrion. Positions 312, 362, and 412 each coordinate S-adenosyl-L-methionine. Residue Cys-440 is the Nucleophile of the active site. Glu-486 acts as the Proton acceptor in catalysis.

It belongs to the class I-like SAM-binding methyltransferase superfamily. RNA M5U methyltransferase family.

The protein localises to the mitochondrion matrix. It carries out the reaction uridine(54) in tRNA + S-adenosyl-L-methionine = 5-methyluridine(54) in tRNA + S-adenosyl-L-homocysteine + H(+). The catalysed reaction is a uridine in 12S rRNA + S-adenosyl-L-methionine = a 5-methyluridine in 12S rRNA + S-adenosyl-L-homocysteine + H(+). In terms of biological role, mitochondrial S-adenosyl-L-methionine-dependent methyltransferase that catalyzes the formation of 5-methyl-uridine in tRNAs and 12S rRNA. Catalyzes the methylation of uridine at position 54 (m5U54) in all tRNAs. Specifically methylates the uridine in position 425 of 12S rRNA (m5U425). Does not affect RNA stability or mitochondrial translation. This Mus musculus (Mouse) protein is tRNA (uracil-5-)-methyltransferase homolog B.